A 635-amino-acid chain; its full sequence is Cerevisin (635 aa).

A signal peptide spans 1–19 (MKLENTLFTLGALGSISAA). A propeptide spanning residues 20-280 (LVIPNLENAA…VERDSIVEAT (261 aa)) is cleaved from the precursor. Composition is skewed to basic and acidic residues over residues 35–50 (INKEDHHERPRKVEFT), 74–85 (KGQDKESPEFNG), 94–109 (SAHEGGKGMKPKHESS), and 126–136 (GCHENKVEEKK). Positions 35 to 155 (INKEDHHERP…KHHEKTLEKG (121 aa)) are disordered. Basic residues predominate over residues 137-155 (MKGKKVKGKKHHEKTLEKG). Positions 182 to 278 (RYIIVFKRGA…DFVERDSIVE (97 aa)) constitute an Inhibitor I9 domain. The 326-residue stretch at 289–614 (PWGLARISHR…KQELNMDEFI (326 aa)) folds into the Peptidase S8 domain. Catalysis depends on charge relay system residues D325 and H357. Residues C460 and C491 are joined by a disulfide bond. Residue S519 is the Charge relay system of the active site. The propeptide occupies 575-635 (DTPNVLIYNG…RDILDKLNII (61 aa)). N594 is a glycosylation site (N-linked (GlcNAc...) asparagine).

This sequence belongs to the peptidase S8 family. Post-translationally, activated by N- and C-terminal proteolytic cleavage. Protease B (PrB/PRB1) processing requires at least 4 cleavages. First, the signal peptide is removed from the 76 kDa preproprotease B by signal peptidase in the ER. Then, PrB removes its own Pro-region (in trans) at the N-terminus, producing a 39 kDa form before exiting the ER. In the Golgi complex, the C-terminal Post-region of the 40 kDa proprotease B undergoes protease A (PrA/PEP4)-mediated processing to a 37 kDa intermediate, which in turn is quickly processed again by PrB in trans to yield the 31 kDa mature PrB. In terms of processing, glycosylated. Preproprotease B is a 76 kDa unglycosylated precursor that enters the endoplasmic reticulum (ER), where it receives one Asn-linked and an undetermined number of non-Asn-linked carbohydrate side chains. In the Golgi complex, the 39 kDa form becomes 40 kDa, due to elaboration of the Asn-linked side chain. The ultimate processing step removes a peptide containing the Asn-linked chain. Mature PrB has only non-Asn-linked carbohydrates.

The protein resides in the vacuole. It catalyses the reaction Hydrolysis of proteins with broad specificity, and of Bz-Arg-OEt &gt; Ac-Tyr-OEt. Does not hydrolyze peptide amides.. In terms of biological role, vacuolar proteinase B involved in protein degradation in the vacuole. Among other substrates, acts on carboxypeptidase Y (cpY/PRC1) to activate it by processing its Pro-peptide. Required for meiosis and spore formation, and for optimal survival in stationary phase. This is Cerevisin (PRB1) from Saccharomyces cerevisiae (strain ATCC 204508 / S288c) (Baker's yeast).